The sequence spans 185 residues: MVVGLLGGSFDPPHAGHVHISLEALKRFRLDRVWWLVSPGNPLKPRPPAPLPARLAEARRLMRHPRVVVTDIEARLGTRFTAETLAALRARYPGVRFVWLMGADNLAQFHRWDRWQGIMRTVPVGVLARPGAGLRSRTSPAARIYARARVGAADLAAARPPAWCFLNLPMVDLSSTAIRATGRWR.

The protein belongs to the NadD family.

It carries out the reaction nicotinate beta-D-ribonucleotide + ATP + H(+) = deamido-NAD(+) + diphosphate. The protein operates within cofactor biosynthesis; NAD(+) biosynthesis; deamido-NAD(+) from nicotinate D-ribonucleotide: step 1/1. In terms of biological role, catalyzes the reversible adenylation of nicotinate mononucleotide (NaMN) to nicotinic acid adenine dinucleotide (NaAD). The polypeptide is Probable nicotinate-nucleotide adenylyltransferase (Cereibacter sphaeroides (strain ATCC 17025 / ATH 2.4.3) (Rhodobacter sphaeroides)).